Reading from the N-terminus, the 660-residue chain is Replication protein E1 (660 aa).

Positions 1-60 (MADNSGTEGEEEDCSEAERAGGWFMVEAIVDRRTGDTISSDEDEEDEGEDMVDFIDDRPI) are disordered. The segment covering 39-54 (SSDEDEEDEGEDMVDF) has biased composition (acidic residues). The Nuclear localization signal motif lies at 87-89 (KRK). Residues serine 93, serine 97, serine 109, and serine 122 each carry the phosphoserine; by host modification. The Nuclear export signal motif lies at 108 to 117 (LSPRLDAIKL). Positions 128-196 (LFQLPDSGYG…DGEESQPLST (69 aa)) are disordered. Over residues 136 to 163 (YGQTQVDTDTGPSQVQDGCETGDQNGRQ) the composition is skewed to polar residues. Basic and acidic residues predominate over residues 169–186 (SGTKDGENGSQEEERAGG). The interval 197-363 (ETEKGACGVL…QTMVGHALQE (167 aa)) is DNA-binding region. The 151-residue stretch at 462–612 (VEFIPFLCAF…CPLTSKGEPV (151 aa)) folds into the SF3 helicase domain. Residue 488–495 (GPADTGKS) coordinates ATP. Residue lysine 569 forms a Glycyl lysine isopeptide (Lys-Gly) (interchain with G-Cter in SUMO) linkage. Positions 635-644 (DPDDEEENGE) are enriched in acidic residues. A disordered region spans residues 635–660 (DPDDEEENGEPSEPFRCVPGQNTRTV).

This sequence belongs to the papillomaviridae E1 protein family. In terms of assembly, can form hexamers. Interacts with E2 protein; this interaction increases E1 DNA binding specificity. Interacts with host DNA polymerase subunit POLA2. Interacts with host single stranded DNA-binding protein RPA1. Interacts with host TOP1; this interaction stimulates the enzymatic activity of TOP1. Post-translationally, phosphorylated. Sumoylated.

It is found in the host nucleus. It carries out the reaction Couples ATP hydrolysis with the unwinding of duplex DNA by translocating in the 3'-5' direction.. The enzyme catalyses ATP + H2O = ADP + phosphate + H(+). Functionally, ATP-dependent DNA 3'-5' helicase required for initiation of viral DNA replication. It forms a complex with the viral E2 protein. The E1-E2 complex binds to the replication origin which contains binding sites for both proteins. During the initial step, a dimer of E1 interacts with a dimer of protein E2 leading to a complex that binds the viral origin of replication with high specificity. Then, a second dimer of E1 displaces the E2 dimer in an ATP-dependent manner to form the E1 tetramer. Following this, two E1 monomers are added to each half of the site, which results in the formation of two E1 trimers on the viral ori. Subsequently, two hexamers will be created. The double hexamer acts as a bi-directional helicase machinery and unwinds the viral DNA and then recruits the host DNA polymerase to start replication. In Human papillomavirus 29, this protein is Replication protein E1.